The primary structure comprises 333 residues: tRNA U34 carboxymethyltransferase (333 aa).

Residues K97, W111, K116, G136, 158 to 160 (DPS), 189 to 190 (IE), M205, Y209, and R324 contribute to the carboxy-S-adenosyl-L-methionine site.

It belongs to the class I-like SAM-binding methyltransferase superfamily. CmoB family. Homotetramer.

The enzyme catalyses carboxy-S-adenosyl-L-methionine + 5-hydroxyuridine(34) in tRNA = 5-carboxymethoxyuridine(34) in tRNA + S-adenosyl-L-homocysteine + H(+). Its function is as follows. Catalyzes carboxymethyl transfer from carboxy-S-adenosyl-L-methionine (Cx-SAM) to 5-hydroxyuridine (ho5U) to form 5-carboxymethoxyuridine (cmo5U) at position 34 in tRNAs. The protein is tRNA U34 carboxymethyltransferase of Chromohalobacter salexigens (strain ATCC BAA-138 / DSM 3043 / CIP 106854 / NCIMB 13768 / 1H11).